The sequence spans 21 residues: Peptidyl-prolyl cis-trans isomerase (21 aa).

The segment at 1 to 21 is disordered; that stretch reads ENFKIKHTEPGLLSMANAGKN.

Belongs to the cyclophilin-type PPIase family. PPIase A subfamily.

It carries out the reaction [protein]-peptidylproline (omega=180) = [protein]-peptidylproline (omega=0). Functionally, PPIases accelerate the folding of proteins. It catalyzes the cis-trans isomerization of proline imidic peptide bonds in oligopeptides. The protein is Peptidyl-prolyl cis-trans isomerase of Naegleria fowleri (Brain eating amoeba).